Consider the following 221-residue polypeptide: Deoxyribose-phosphate aldolase (221 aa).

Catalysis depends on D90, which acts as the Proton donor/acceptor. The active-site Schiff-base intermediate with acetaldehyde is K152. K181 serves as the catalytic Proton donor/acceptor.

It belongs to the DeoC/FbaB aldolase family. DeoC type 1 subfamily.

The protein localises to the cytoplasm. The catalysed reaction is 2-deoxy-D-ribose 5-phosphate = D-glyceraldehyde 3-phosphate + acetaldehyde. It functions in the pathway carbohydrate degradation; 2-deoxy-D-ribose 1-phosphate degradation; D-glyceraldehyde 3-phosphate and acetaldehyde from 2-deoxy-alpha-D-ribose 1-phosphate: step 2/2. Functionally, catalyzes a reversible aldol reaction between acetaldehyde and D-glyceraldehyde 3-phosphate to generate 2-deoxy-D-ribose 5-phosphate. This is Deoxyribose-phosphate aldolase from Syntrophotalea carbinolica (strain DSM 2380 / NBRC 103641 / GraBd1) (Pelobacter carbinolicus).